We begin with the raw amino-acid sequence, 674 residues long: Tripartite terminase subunit 3 (674 aa).

Residues 212 to 219 (VPRRHGKT) carry the Walker A motif motif. Residues 305 to 310 (LLLVDE) carry the Walker B motif motif. The active-site For ATPase activity is the glutamate 310. Residues aspartate 463, glutamate 534, and aspartate 651 each act as for nuclease activity in the active site.

The protein belongs to the herpesviridae TRM3 protein family. In terms of assembly, interacts with the terminase subunits TRM1 and TRM2. Interacts with portal protein.

The protein localises to the host nucleus. Functionally, component of the molecular motor that translocates viral genomic DNA in empty capsid during DNA packaging. Forms a tripartite terminase complex together with TRM1 and TRM2 in the host cytoplasm. Once the complex reaches the host nucleus, it interacts with the capsid portal vertex. This portal forms a ring in which genomic DNA is translocated into the capsid. TRM3 carries an RNase H-like nuclease activity that plays an important role for the cleavage of concatemeric viral DNA into unit length genomes. In Homo sapiens (Human), this protein is Tripartite terminase subunit 3.